Consider the following 129-residue polypeptide: Small ribosomal subunit protein eS6 (129 aa).

Belongs to the eukaryotic ribosomal protein eS6 family.

This Methanocorpusculum labreanum (strain ATCC 43576 / DSM 4855 / Z) protein is Small ribosomal subunit protein eS6.